Reading from the N-terminus, the 255-residue chain is uncharacterized protein (255 aa).

This is an uncharacterized protein from Acanthamoeba polyphaga mimivirus (APMV).